The sequence spans 74 residues: DNA-directed RNA polymerase subunit omega (74 aa).

Belongs to the RNA polymerase subunit omega family. In terms of assembly, the RNAP catalytic core consists of 2 alpha, 1 beta, 1 beta' and 1 omega subunit. When a sigma factor is associated with the core the holoenzyme is formed, which can initiate transcription.

The catalysed reaction is RNA(n) + a ribonucleoside 5'-triphosphate = RNA(n+1) + diphosphate. Functionally, promotes RNA polymerase assembly. Latches the N- and C-terminal regions of the beta' subunit thereby facilitating its interaction with the beta and alpha subunits. This is DNA-directed RNA polymerase subunit omega from Helicobacter acinonychis (strain Sheeba).